Here is a 739-residue protein sequence, read N- to C-terminus: Phosphoribosylformylglycinamidine synthase subunit PurL (739 aa).

Residue histidine 54 is part of the active site. Residues tyrosine 57 and lysine 96 each contribute to the ATP site. A Mg(2+)-binding site is contributed by glutamate 98. Residues 99–102 (SHNH) and arginine 121 contribute to the substrate site. Histidine 100 serves as the catalytic Proton acceptor. A Mg(2+)-binding site is contributed by aspartate 122. Glutamine 245 is a binding site for substrate. Aspartate 275 provides a ligand contact to Mg(2+). 319–321 (ESQ) contacts substrate. ATP is bound by residues aspartate 504 and glycine 541. Asparagine 542 serves as a coordination point for Mg(2+). Serine 544 serves as a coordination point for substrate.

The protein belongs to the FGAMS family. In terms of assembly, monomer. Part of the FGAM synthase complex composed of 1 PurL, 1 PurQ and 2 PurS subunits.

It is found in the cytoplasm. It catalyses the reaction N(2)-formyl-N(1)-(5-phospho-beta-D-ribosyl)glycinamide + L-glutamine + ATP + H2O = 2-formamido-N(1)-(5-O-phospho-beta-D-ribosyl)acetamidine + L-glutamate + ADP + phosphate + H(+). It functions in the pathway purine metabolism; IMP biosynthesis via de novo pathway; 5-amino-1-(5-phospho-D-ribosyl)imidazole from N(2)-formyl-N(1)-(5-phospho-D-ribosyl)glycinamide: step 1/2. Functionally, part of the phosphoribosylformylglycinamidine synthase complex involved in the purines biosynthetic pathway. Catalyzes the ATP-dependent conversion of formylglycinamide ribonucleotide (FGAR) and glutamine to yield formylglycinamidine ribonucleotide (FGAM) and glutamate. The FGAM synthase complex is composed of three subunits. PurQ produces an ammonia molecule by converting glutamine to glutamate. PurL transfers the ammonia molecule to FGAR to form FGAM in an ATP-dependent manner. PurS interacts with PurQ and PurL and is thought to assist in the transfer of the ammonia molecule from PurQ to PurL. This chain is Phosphoribosylformylglycinamidine synthase subunit PurL, found in Lactococcus lactis subsp. cremoris (Streptococcus cremoris).